A 149-amino-acid polypeptide reads, in one-letter code: Cyanate hydratase (149 aa).

Active-site residues include arginine 90, glutamate 93, and serine 116.

The protein belongs to the cyanase family.

The enzyme catalyses cyanate + hydrogencarbonate + 3 H(+) = NH4(+) + 2 CO2. Functionally, catalyzes the reaction of cyanate with bicarbonate to produce ammonia and carbon dioxide. The protein is Cyanate hydratase of Aquifex aeolicus (strain VF5).